A 320-amino-acid polypeptide reads, in one-letter code: MRQTKTGILLANLGTPDAPTPEAVKRYLKQFLSDRRVVDTSRLLWWPLLRGVILPLRSPRVAKLYASVWMEDGSPLMVYSRQQQQALAQRLPDTPVALGMSYGSPSLESAVDELLAEHVDHIVVLPLYPQFSCSTVGAVWDELARILARKRSIPGISFIRDYADNHDYINALANSVRASFAKHGEPDLLLLSYHGIPQRYADEGDDYPQRCRTTTRELASALGMAPEKVMMTFQSRFGREPWLMPYTDETLKMLGEKGVGHIQVMCPGFAADCLETLEEIAEQNREVFLGAGGKKYEYIPALNATPEHIEMMANLVAAYR.

Fe cation-binding residues include histidine 194 and glutamate 275.

Belongs to the ferrochelatase family. In terms of assembly, monomer.

It localises to the cytoplasm. The enzyme catalyses heme b + 2 H(+) = protoporphyrin IX + Fe(2+). It participates in porphyrin-containing compound metabolism; protoheme biosynthesis; protoheme from protoporphyrin-IX: step 1/1. Catalyzes the ferrous insertion into protoporphyrin IX. This is Ferrochelatase from Escherichia coli (strain 55989 / EAEC).